The following is a 181-amino-acid chain: Probable GTP-binding protein EngB (181 aa).

An EngB-type G domain is found at 18-181; it reads PKNEICFVGR…LQDLVNNLFN (164 aa). GTP contacts are provided by residues 26 to 33, 52 to 56, 70 to 73, 137 to 140, and 164 to 166; these read GRSNVGKS, GKTKL, DLPG, TKRD, and VSI. 2 residues coordinate Mg(2+): Ser33 and Thr54.

Belongs to the TRAFAC class TrmE-Era-EngA-EngB-Septin-like GTPase superfamily. EngB GTPase family. Mg(2+) serves as cofactor.

Necessary for normal cell division and for the maintenance of normal septation. This is Probable GTP-binding protein EngB from Mycoplasma mobile (strain ATCC 43663 / 163K / NCTC 11711) (Mesomycoplasma mobile).